A 63-amino-acid polypeptide reads, in one-letter code: SPbeta prophage-derived uncharacterized protein YotC (63 aa).

This Bacillus subtilis (strain 168) protein is SPbeta prophage-derived uncharacterized protein YotC (yotC).